Consider the following 1547-residue polypeptide: Mediator of RNA polymerase II transcription subunit 12 (1547 aa).

Disordered regions lie at residues 1–63 and 1356–1509; these read MTSR…RPHI and PVIP…QQRD. A compositionally biased stretch (pro residues) spans 1357–1369; it reads VIPPLEPPQPPNP. Polar residues predominate over residues 1379 to 1390; sequence YQSPQMTSNTAA. 2 stretches are compositionally biased toward low complexity: residues 1398 to 1413 and 1446 to 1468; these read QQQQ…QQTQ and LSPL…RASQ. Polar residues-rich tracts occupy residues 1469–1480 and 1499–1509; these read PSPIHSQRPTSV and AHTSYVNQQRD.

This sequence belongs to the Mediator complex subunit 12 family. As to quaternary structure, component of the SRB8-11 complex, which itself associates with the Mediator complex.

It is found in the nucleus. Component of the SRB8-11 complex. The SRB8-11 complex is a regulatory module of the Mediator complex which is itself involved in regulation of basal and activated RNA polymerase II-dependent transcription. The SRB8-11 complex may be involved in the transcriptional repression of a subset of genes regulated by Mediator. It may inhibit the association of the Mediator complex with RNA polymerase II to form the holoenzyme complex. This is Mediator of RNA polymerase II transcription subunit 12 (SRB8) from Phaeosphaeria nodorum (strain SN15 / ATCC MYA-4574 / FGSC 10173) (Glume blotch fungus).